A 65-amino-acid polypeptide reads, in one-letter code: Large ribosomal subunit protein bL35 (65 aa).

This sequence belongs to the bacterial ribosomal protein bL35 family.

The protein is Large ribosomal subunit protein bL35 of Nitrosomonas europaea (strain ATCC 19718 / CIP 103999 / KCTC 2705 / NBRC 14298).